Here is a 218-residue protein sequence, read N- to C-terminus: N-(5'-phosphoribosyl)anthranilate isomerase (218 aa).

Belongs to the TrpF family.

It catalyses the reaction N-(5-phospho-beta-D-ribosyl)anthranilate = 1-(2-carboxyphenylamino)-1-deoxy-D-ribulose 5-phosphate. It functions in the pathway amino-acid biosynthesis; L-tryptophan biosynthesis; L-tryptophan from chorismate: step 3/5. The chain is N-(5'-phosphoribosyl)anthranilate isomerase from Rhodopseudomonas palustris (strain BisB5).